We begin with the raw amino-acid sequence, 341 residues long: Putative UPF0607 protein ENSP00000383144 (341 aa).

Disordered stretches follow at residues 70-131 and 218-279; these read RLPK…NPRP and LMVG…PPAK. Over residues 72-101 the composition is skewed to basic and acidic residues; sequence PKTEVRAEEPKEATEVKDQVETQEQEDNKR. The segment covering 108-127 has biased composition (polar residues); sequence EAASTSRPLETQGNLTSSWY. Basic residues predominate over residues 243–252; that stretch reads AGHRSHKRKL.

It belongs to the UPF0607 family.

The polypeptide is Putative UPF0607 protein ENSP00000383144 (Homo sapiens (Human)).